The primary structure comprises 301 residues: Probable alpha-L-glutamate ligase 2 (301 aa).

An ATP-grasp domain is found at 104-287 (LQLLSRKGIG…VTEPIVEYIE (184 aa)). Residues Lys-141, 178–179 (EY), Asp-187, and 211–213 (RSN) each bind ATP. Mg(2+)-binding residues include Asp-248, Glu-260, and Asn-262. Asp-248, Glu-260, and Asn-262 together coordinate Mn(2+).

It belongs to the RimK family. It depends on Mg(2+) as a cofactor. Requires Mn(2+) as cofactor.

The polypeptide is Probable alpha-L-glutamate ligase 2 (Shewanella baltica (strain OS195)).